Consider the following 73-residue polypeptide: Large ribosomal subunit protein bL31 (73 aa).

Belongs to the bacterial ribosomal protein bL31 family. Type A subfamily. In terms of assembly, part of the 50S ribosomal subunit.

Binds the 23S rRNA. This is Large ribosomal subunit protein bL31 from Bartonella henselae (strain ATCC 49882 / DSM 28221 / CCUG 30454 / Houston 1) (Rochalimaea henselae).